The primary structure comprises 166 residues: Lipoprotein signal peptidase (166 aa).

Helical transmembrane passes span 9–29 (ASGA…FDQL), 45–65 (ALTS…FGFL), 71–91 (WQRW…CFLL), and 100–120 (FSLS…DRLV). Active-site residues include Asp126 and Asp144. A helical transmembrane segment spans residues 135–155 (WHFPAFNLADSAITIGAVLLV).

It belongs to the peptidase A8 family.

Its subcellular location is the cell inner membrane. It catalyses the reaction Release of signal peptides from bacterial membrane prolipoproteins. Hydrolyzes -Xaa-Yaa-Zaa-|-(S,diacylglyceryl)Cys-, in which Xaa is hydrophobic (preferably Leu), and Yaa (Ala or Ser) and Zaa (Gly or Ala) have small, neutral side chains.. The protein operates within protein modification; lipoprotein biosynthesis (signal peptide cleavage). Functionally, this protein specifically catalyzes the removal of signal peptides from prolipoproteins. The protein is Lipoprotein signal peptidase of Burkholderia ambifaria (strain ATCC BAA-244 / DSM 16087 / CCUG 44356 / LMG 19182 / AMMD) (Burkholderia cepacia (strain AMMD)).